Here is a 1304-residue protein sequence, read N- to C-terminus: Myosin-1 (1304 aa).

Residues 1–12 (MAIVKRGVRTKN) show a composition bias toward basic residues. A disordered region spans residues 1–24 (MAIVKRGVRTKNKQSQQPSKSGIK). The Myosin motor domain maps to 36–730 (VGVSDLTLLS…TLFALEDMRD (695 aa)). 129–136 (GESGAGKT) is a binding site for ATP. Serine 364 carries the phosphoserine modification. The actin-binding stretch occupies residues 413-496 (SIGILDIYGF…PGLFAALNDS (84 aa)). 2 consecutive IQ domains span residues 734 to 754 (HNMA…KDDA) and 755 to 780 (ARLI…YGNG). In terms of domain architecture, TH1 spans 788–978 (RRRMSMLGSR…TVTVRQGLPG (191 aa)). 2 disordered regions span residues 963–1162 (DSYK…TYKA) and 1214–1304 (ECDP…DDDW). Composition is skewed to polar residues over residues 964-983 (SYKS…SQNP) and 1001-1012 (RGSNMRSTSSYQ). Composition is skewed to low complexity over residues 1029-1052 (QPPV…PQAQ), 1072-1096 (QPHA…PQAQ), and 1120-1140 (PSAP…KKNV). A compositionally biased stretch (pro residues) spans 1141–1156 (APPPPPAAASPPPKPK). The SH3 domain occupies 1155–1217 (PKFPTYKAAY…PAAYVVECDP (63 aa)). 2 stretches are compositionally biased toward low complexity: residues 1217 to 1227 (PPANSPAGNAK) and 1236 to 1256 (LNSA…NGAG). Acidic residues predominate over residues 1292-1304 (DSDEEDEEDDDDW).

Belongs to the TRAFAC class myosin-kinesin ATPase superfamily. Myosin family. In terms of processing, phosphorylation of the TEDS site (Ser-364) is required for the polarization of the actin cytoskeleton. Phosphorylation probably activates the myosin-I ATPase activity.

Its subcellular location is the cytoplasm. It is found in the cytoskeleton. The protein localises to the actin patch. Type-I myosin implicated in the organization of the actin cytoskeleton. Required for proper actin cytoskeleton polarization. At the cell cortex, assembles in patch-like structures together with proteins from the actin-polymerizing machinery and promotes actin assembly. Functions as actin nucleation-promoting factor (NPF) for the Arp2/3 complex. In Debaryomyces hansenii (strain ATCC 36239 / CBS 767 / BCRC 21394 / JCM 1990 / NBRC 0083 / IGC 2968) (Yeast), this protein is Myosin-1 (MYO1).